The sequence spans 222 residues: MRAISILSGGMDSAVATALMMDEYEIHAITFDYGQRSARMELEYARRLSEHLGIEHTTLDLQWLGRLGGSVLTAGGDIPSPSNLDDTVECLETARKVWVPGRNLVFTSIGVSFAEAMDAGAVIVGWDLEEAETFPDNSEEFLDAFNRLLEIGTLDGVRVVAPVIGMTKREIVEAGHEVGLPFELTYSCYAGDRVHCGVCESCMRRRRAFELAGIDDPTEYRE.

L7 to T17 is an ATP binding site. The Zn(2+) site is built by C188, C196, C199, and C202.

Belongs to the QueC family. Zn(2+) is required as a cofactor.

The enzyme catalyses 7-carboxy-7-deazaguanine + NH4(+) + ATP = 7-cyano-7-deazaguanine + ADP + phosphate + H2O + H(+). It functions in the pathway purine metabolism; 7-cyano-7-deazaguanine biosynthesis. Catalyzes the ATP-dependent conversion of 7-carboxy-7-deazaguanine (CDG) to 7-cyano-7-deazaguanine (preQ(0)). This Methanothermobacter thermautotrophicus (strain ATCC 29096 / DSM 1053 / JCM 10044 / NBRC 100330 / Delta H) (Methanobacterium thermoautotrophicum) protein is 7-cyano-7-deazaguanine synthase.